Consider the following 345-residue polypeptide: Fe(3+) ions import ATP-binding protein FbpC (345 aa).

The ABC transporter domain occupies 4-236 (LELHGIGKSY…PVDEPTASFL (233 aa)). Position 36–43 (36–43 (GPSGSGKT)) interacts with ATP.

It belongs to the ABC transporter superfamily. Fe(3+) ion importer (TC 3.A.1.10) family. As to quaternary structure, the complex is composed of two ATP-binding proteins (FbpC), two transmembrane proteins (FbpB) and a solute-binding protein (FbpA).

It localises to the cell inner membrane. It carries out the reaction Fe(3+)(out) + ATP + H2O = Fe(3+)(in) + ADP + phosphate + H(+). Its function is as follows. Part of the ABC transporter complex FbpABC involved in Fe(3+) ions import. Responsible for energy coupling to the transport system. The protein is Fe(3+) ions import ATP-binding protein FbpC of Serratia marcescens.